The sequence spans 273 residues: Nicotinamide N-methyltransferase (273 aa).

S-adenosyl-L-methionine-binding positions include tyrosine 35, tyrosine 40, 74–75 (GA), tyrosine 80, aspartate 96, asparagine 101, and 152–153 (NV).

It belongs to the class I-like SAM-binding methyltransferase superfamily. NNMT/PNMT/TEMT family.

It carries out the reaction nicotinamide + S-adenosyl-L-methionine = 1-methylnicotinamide + S-adenosyl-L-homocysteine. In terms of biological role, catalyzes the N-methylation of nicotinamide and other pyridines to form pyridinium ions. Involved in regulation of lifespan extension downstream of the sirtuin sir-2.1, probably through its role in nicotinic acid metabolism. In Caenorhabditis elegans, this protein is Nicotinamide N-methyltransferase.